The primary structure comprises 238 residues: Probable transcriptional regulatory protein YeeN (238 aa).

It belongs to the TACO1 family. YeeN subfamily.

The protein resides in the cytoplasm. In Shigella sonnei (strain Ss046), this protein is Probable transcriptional regulatory protein YeeN.